Here is a 151-residue protein sequence, read N- to C-terminus: Small ribosomal subunit protein bS6 (151 aa).

The disordered stretch occupies residues 97–151 (EAEPSAMMQKRDRDDRKDRDRGDRPRRRDDDFGGGDRGDRGDRGDRPERNFGGEN). The span at 105–151 (QKRDRDDRKDRDRGDRPRRRDDDFGGGDRGDRGDRGDRPERNFGGEN) shows a compositional bias: basic and acidic residues.

The protein belongs to the bacterial ribosomal protein bS6 family.

Binds together with bS18 to 16S ribosomal RNA. This Methylorubrum populi (strain ATCC BAA-705 / NCIMB 13946 / BJ001) (Methylobacterium populi) protein is Small ribosomal subunit protein bS6.